Consider the following 124-residue polypeptide: IIFSMWLLFSFSESTEYIAGDSESSWKVNFPSREALIDWATRHQFTYSDTVVNEDEDHDCNTKIHSKLGDMVVTKRPLVLPPLITLPLSPSPAPAPNTSGAAAGCGFMAFLEVSVAMLMFLIWL.

An N-terminal signal peptide occupies residues 1–12 (IIFSMWLLFSFS).

In terms of biological role, involved in the infection process during the plant-rhizobium interaction. This Vicia sativa (Spring vetch) protein is Early nodulin-5 (ENOD5).